Consider the following 310-residue polypeptide: HTH-type transcriptional regulator PunR (310 aa).

The region spanning 2–59 (WSEYSLEVVDAVARNGSFSAAAQELHRVPSAVSYTVRQLEEWLAVPLFERRHRDVELT) is the HTH lysR-type domain. Positions 19-38 (FSAAAQELHRVPSAVSYTVR) form a DNA-binding region, H-T-H motif.

It belongs to the LysR transcriptional regulatory family.

The protein resides in the cytoplasm. In terms of biological role, transcriptional regulator that activates the expression of punC, which encodes a purine nucleoside transporter. The chain is HTH-type transcriptional regulator PunR from Escherichia coli O157:H7.